Here is a 347-residue protein sequence, read N- to C-terminus: Dehydratase asqC (347 aa).

The N-terminal stretch at 1-18 (MRPAILAAFSTLPAAAKA) is a signal peptide. 7 N-linked (GlcNAc...) asparagine glycosylation sites follow: N51, N103, N131, N143, N215, N264, and N281.

The catalysed reaction is [(1'E)-5'-(3',3'-dimethyloxiran-2'-yl)-3'-hydroxy-3'-methylpent-1'-en-1'-yl]-quinolinone B = (1'E,3'E)-5-(3,3-dimethyloxiran-2-yl)-3-methylhexa-1,3-dienyl-quinolinone B + H2O. It participates in secondary metabolite biosynthesis. The protein operates within alkaloid biosynthesis. Its pathway is mycotoxin biosynthesis. Dehydratase; part of the gene cluster that mediates the biosynthesis of the aspoquinolone mycotoxins. Within the pathway, the dehydratase asqC catalyzes the dehydratation of the epoxide at C-3 to produce (1'E,3'E)-5-(3,3-dimethyloxiran-2-yl)-3-methylhexa-1,3-dienyl-quinolinone B. The first step of the pathway is catalyzed by the nonribosomal peptide synthetase asqK that condenses anthranilic acid and O-methyl-L-tyrosine to produce 4'-methoxycyclopeptin. 4'-methoxycyclopeptin is then converted to 4'-methoxydehydrocyclopeptin by the ketoglutarate-dependent dioxygenase asqJ. AsqJ also converts its first product 4'-methoxydehydrocyclopeptin to 4'-methoxycyclopenin. The following conversion of 4'-methoxycyclopenin into 4'-methoxyviridicatin is catalyzed by the cyclopenase asqI. 4'-methoxyviridicatin is the precursor of quinolone natural products, and is further converted to quinolinone B. The prenyltransferase asqH1 then catalyzes the canonical Friedel-Crafts alkylation of quinolinone B with dimethylallyl cation to yield dimethylallyl quinolone, which is subjected to FAD-dependent dehydrogenation by the FAD-linked oxidoreductase asqF to yield conjugated aryl diene. The delta(3') double bond then serves as the site of the second alkylation with DMAPP catalyzed by the prenyltransferase asqH2 to yield a carbenium ion intermediate, which can be attacked by H(2)O to yield a styrenyl quinolone containing a C3'-hydroxyprenyl chain. The FAD-dependent monooxygenase asqG performs epoxidation of the terminal C7'-C8' olefin. Finally, after dehydratation of the epoxide at C3 by asqC, the quinolone epoxide rearrangement protein asqO catalyzes an enzymatic 3-exo-tet cyclization to yield the cyclopropyl-THF ring system in aspoquinolone. The chain is Dehydratase asqC from Emericella nidulans (strain FGSC A4 / ATCC 38163 / CBS 112.46 / NRRL 194 / M139) (Aspergillus nidulans).